Here is a 499-residue protein sequence, read N- to C-terminus: Glycerol kinase (499 aa).

Residue Thr-13 coordinates ADP. The ATP site is built by Thr-13, Thr-14, and Ser-15. Thr-13 is a binding site for sn-glycerol 3-phosphate. Residue Arg-17 participates in ADP binding. Positions 83, 84, 135, and 244 each coordinate sn-glycerol 3-phosphate. Glycerol contacts are provided by Arg-83, Glu-84, Tyr-135, Asp-244, and Gln-245. Positions 266 and 309 each coordinate ADP. Thr-266, Gly-309, Gln-313, and Gly-410 together coordinate ATP. Gly-410 and Asn-414 together coordinate ADP.

The protein belongs to the FGGY kinase family.

The catalysed reaction is glycerol + ATP = sn-glycerol 3-phosphate + ADP + H(+). Its pathway is polyol metabolism; glycerol degradation via glycerol kinase pathway; sn-glycerol 3-phosphate from glycerol: step 1/1. With respect to regulation, inhibited by fructose 1,6-bisphosphate (FBP). Key enzyme in the regulation of glycerol uptake and metabolism. Catalyzes the phosphorylation of glycerol to yield sn-glycerol 3-phosphate. In Paraburkholderia phymatum (strain DSM 17167 / CIP 108236 / LMG 21445 / STM815) (Burkholderia phymatum), this protein is Glycerol kinase.